The following is a 195-amino-acid chain: Small ribosomal subunit protein uS5 (195 aa).

The disordered stretch occupies residues 1-20 (MAREREGGGRGRREDREERD). Residues 23-86 (FVDKLVHINR…EAAKRGLIRV (64 aa)) enclose the S5 DRBM domain. Residues 161–195 (DSPRSVAARRGIKVSTLQSRRRDADPADQSEAAVA) are disordered.

Belongs to the universal ribosomal protein uS5 family. As to quaternary structure, part of the 30S ribosomal subunit. Contacts proteins S4 and S8.

In terms of biological role, with S4 and S12 plays an important role in translational accuracy. Its function is as follows. Located at the back of the 30S subunit body where it stabilizes the conformation of the head with respect to the body. The polypeptide is Small ribosomal subunit protein uS5 (Methylobacterium radiotolerans (strain ATCC 27329 / DSM 1819 / JCM 2831 / NBRC 15690 / NCIMB 10815 / 0-1)).